Reading from the N-terminus, the 1790-residue chain is Non-reducing polyketide synthase gsfA (1790 aa).

Residues 20–263 (GDQRTLFRKL…AMRKIQGMWH (244 aa)) are N-terminal acylcarrier protein transacylase domain (SAT). The region spanning 392-822 (SSKIAVVGMS…GGNTAMIIEE (431 aa)) is the Ketosynthase family 3 (KS3) domain. Residues Cys-563, His-698, and His-741 each act as for beta-ketoacyl synthase activity in the active site. The segment at 922–1223 (FAFAGQGTFY…CSTLHRDSDN (302 aa)) is malonyl-CoA:ACP transacylase (MAT) domain. The tract at residues 1298-1615 (TSSIHRLYSE…PRIMLNRFFQ (318 aa)) is product template (PT) domain. The segment at 1302-1435 (HRLYSENYDS…AYYEDPSTWL (134 aa)) is N-terminal hotdog fold. Positions 1302–1611 (HRLYSENYDS…FRQWPRIMLN (310 aa)) constitute a PKS/mFAS DH domain. The active-site Proton acceptor; for dehydratase activity is the His-1334. The interval 1460–1611 (MANKLTTSLA…FRQWPRIMLN (152 aa)) is C-terminal hotdog fold. Asp-1518 functions as the Proton donor; for dehydratase activity in the catalytic mechanism. Disordered stretches follow at residues 1621–1648 (PPAP…EKTT) and 1686–1718 (LDYS…ADGA). Over residues 1699–1708 (SDERIEKTDS) the composition is skewed to basic and acidic residues. Positions 1716-1790 (DGANDVTSRA…TIGDLKKLLS (75 aa)) constitute a Carrier domain. Position 1753 is an O-(pantetheine 4'-phosphoryl)serine (Ser-1753).

The catalysed reaction is 6 malonyl-CoA + acetyl-CoA + 4 H(+) = 2-(2,4-dihydroxy-6-oxidobenzoyl)-5-hydroxy-3-methylbenzenolate + 6 CO2 + 7 CoA + H2O. It participates in secondary metabolite biosynthesis; terpenoid biosynthesis. Norlichexanthone synthase; part of the gene cluster that mediates the biosynthesis of griseofulvin, an important antifungal drug that has been in use for a long time for treating dermatophyte infections. The first step of the pathway is the formation of the heptaketide backbone by gsfA which is initiated by priming with acetyl-CoA, followed by sequential condensations of 6 malonyl-CoA units. The resulting benzophenone can undergo a spontaneous dehydration to form norlichexanthone. However, the true precursor for the griseofulvin biosynthesis is not norlichexanthone, but the heptaketide benzophenone that is O-methylated at 3-OH by gsfB to produce griseophenone D which is further methylated at 9-OH by gsfC to yield griseophenone C. Griseophenone C is then substrate of halogenase gsfI which is responsible for the regio-specific chlorination at the C13 position to form griseophenone B. The cytochrome P450 gsfF catalyzes the coupling of orcinol and phloroglucinol rings in griseophenone B to form desmethyl-dehydrogriseofulvin A which is further methylated at 5-OH by gsfD to yield dehydrogriseofulvin. Finally, gsfE performs stereospecific reduction of enone 18 of dehydrogriseofulvin to afford the final product griseofulvin. The sequence is that of Non-reducing polyketide synthase gsfA from Penicillium aethiopicum.